The following is a 262-amino-acid chain: Hemin import ATP-binding protein HmuV (262 aa).

Positions 3–244 (LQARNLTLAR…DHMRRVYGIE (242 aa)) constitute an ABC transporter domain. 35–42 (GANGAGKS) contacts ATP.

This sequence belongs to the ABC transporter superfamily. Heme (hemin) importer (TC 3.A.1.14.5) family. In terms of assembly, the complex is composed of two ATP-binding proteins (HmuV), two transmembrane proteins (HmuU) and a solute-binding protein (HmuT).

Its subcellular location is the cell inner membrane. In terms of biological role, part of the ABC transporter complex HmuTUV involved in hemin import. Responsible for energy coupling to the transport system. The protein is Hemin import ATP-binding protein HmuV of Bordetella parapertussis (strain 12822 / ATCC BAA-587 / NCTC 13253).